The chain runs to 382 residues: Gas vesicle protein C1 (382 aa).

A compositionally biased stretch (basic and acidic residues) spans 1–18; sequence MSVTDKRDEMSTARDKFA. The segment at 1-21 is disordered; it reads MSVTDKRDEMSTARDKFAESQ. Repeat copies occupy residues 22 to 60, 61 to 92, 93 to 130, 131 to 168, 169 to 200, 201 to 240, and 241 to 284. Residues 22 to 284 are 7 X approximate tandem repeats; it reads QEFESYADEF…VEAEAEVSPD (263 aa). Residues 260 to 302 show a composition bias toward acidic residues; the sequence is GAAEAEAEPVEADADVEAEAEVSPDEAGGESAGTEEEETEPAE. A disordered region spans residues 260 to 382; the sequence is GAAEAEAEPV…DVPLRPDDKT (123 aa). Residues 303 to 316 are compositionally biased toward low complexity; the sequence is VETAAPEVEGSPAD. Over residues 317–336 the composition is skewed to acidic residues; that stretch reads TADEAEDTEAEEETEEEAPE. Over residues 365-382 the composition is skewed to basic and acidic residues; that stretch reads EYRDEYGEDVPLRPDDKT.

It belongs to the halobacterial gas vesicle GvpC family. As to quaternary structure, forms homodimers, interacts with GvpF1, GvpH1, GvpI1, GvpL1, GvpN1 and GvpO1 via its C-terminus (residues 329-382).

It is found in the gas vesicle. The protein resides in the cytoplasm. Functionally, confers stability, involved in shaping gas vesicles. Gas vesicles are hollow, gas filled proteinaceous nanostructures found in several microbial planktonic microorganisms. They allow positioning of halobacteria at the optimal depth for growth in the poorly aerated, shallow brine pools of their habitat. Its function is as follows. Expression of a 9.5 kb p-vac DNA fragment containing 2 divergently transcribed regions (gvpD-gvpE-gvpF-gvpG-gvpH-gvpI-gvpJ-gvpK-gvpL-gvpM and gvpA-gvpC-gvpN-gvpO) allows H.volcanii to produce gas vesicles. A similar region restores gas vesicle production in H.halobium without the p-vac locus, but it still has the c-vac locus. The polypeptide is Gas vesicle protein C1 (gvpC1) (Halobacterium salinarum (strain ATCC 700922 / JCM 11081 / NRC-1) (Halobacterium halobium)).